The chain runs to 322 residues: Short chain dehydrogenase AOL_s00215g274 (322 aa).

Residues 47-48 (AV), 104-106 (IAV), 197-201 (YNVSK), and 230-232 (VAT) contribute to the NAD(+) site. Y197 serves as the catalytic Proton acceptor.

The protein belongs to the short-chain dehydrogenases/reductases (SDR) family.

The protein operates within secondary metabolite biosynthesis; terpenoid biosynthesis. Short chain dehydrogenase; part of the gene cluster that mediates the biosynthesis of sesquiterpenyl epoxy-cyclohexenoids (SECs) such as anthrobotrisins and arthrosporols, metabolites that possess a novel hybrid carbon skeleton consisting of a polyketide-derived epoxycyclohexenol combined with a terpenoid-derived monocyclic sesquiterpenol substructure (PKS-PTS hybrid). The SEC pathway plays an important role for fungal soil colonization via decreasing fungal nematode-capturing ability. Within the pathway, the cytochrome P450 monooxygenase AOL_s00215g274 is involved in specific regional ketone reductions at C-4 of farnesyl epoxy-quinone. The pathway begins with the biosynthesis of 6-methylsalicylic acid (6-MSA), the first precursor of the polyketide-derived epoxycyclohexenol in arthrosporols, by the polyketide synthase (PKS) AOL_s00215g283 via condensation of 1 acetate and 3 malonate units. The 6-methylsalicylic acid decarboxylase AOL_s00215g281 then catalyzes the decarboxylation of 6-methylsalicylic acid to yield m-cresol. The cytochrome P450 monooxygenase AOL_s00215g282 further oxidizes m-cresol to yield toluquinol. With the assistance of the oxidoreductase AOL_s00215g277, the polyprenyl transferase AOL_s00215g276 catalyzes the farnesylation of toluquinol to produce farnesyl hydroquinone, the hybrid precursor for biosynthesis of SECs. Farnesyl hydroquinone undergoes epoxidation and then subsequent dehydrogenation to form farnesyl epoxy-quinone, the first and simplest SEC. The cytochrome P450 monooxygenase AOL_s00215g278 and the FAD-dependent monooxygenase AOL_s00215g279 might be involved in the oxygenation of the phenol moiety, most likely in the epoxy formation. The cytochrome P450 monooxygenases AOL_s00215g274 and AOL_s00215g280 are involved in specific regional ketone reductions at respectively C-4 and C-1 of farnesyl epoxy-quinone PubMed:33823587. The chain is Short chain dehydrogenase AOL_s00215g274 from Arthrobotrys oligospora (strain ATCC 24927 / CBS 115.81 / DSM 1491) (Nematode-trapping fungus).